Consider the following 545-residue polypeptide: Acetamidase (545 aa).

Active-site charge relay system residues include Lys130 and Ser205. Catalysis depends on Ser229, which acts as the Acyl-ester intermediate.

The protein belongs to the amidase family.

The catalysed reaction is a monocarboxylic acid amide + H2O = a monocarboxylate + NH4(+). It catalyses the reaction acetamide + H2O = acetate + NH4(+). Functionally, allows acetamide to be used as a sole carbon or nitrogen source. This Aspergillus oryzae (strain ATCC 42149 / RIB 40) (Yellow koji mold) protein is Acetamidase (amdS).